A 60-amino-acid polypeptide reads, in one-letter code: Metallothionein B (60 aa).

The beta stretch occupies residues 1–28 (MDPCDCSKSGTCNCGGSCTCTNCSCTTC). 20 residues coordinate a divalent metal cation: C4, C6, C12, C14, C18, C20, C23, C25, C28, C32, C33, C35, C36, C40, C43, C47, C49, C54, C58, and C59. Positions 29 to 60 (KKSCCPCCPSGCTKCASGCVCKGKTCDTSCCQ) are alpha.

Belongs to the metallothionein superfamily. Type 1 family.

Its function is as follows. Metallothioneins have a high content of cysteine residues that bind various heavy metals. In Dicentrarchus labrax (European seabass), this protein is Metallothionein B (mtb).